A 447-amino-acid polypeptide reads, in one-letter code: GTPase Der (447 aa).

EngA-type G domains lie at 4–165 (QIIA…PKEK) and 180–357 (VQIV…KNWN). Residues 10 to 17 (GRPNVGKS), 57 to 61 (DTPGL), 119 to 122 (NKCE), 186 to 193 (GRPNAGKS), 233 to 237 (DTAGL), and 298 to 301 (NKWD) each bind GTP. The 86-residue stretch at 358–443 (KKITTSKLNE…PIRFAYVKTK (86 aa)) folds into the KH-like domain.

It belongs to the TRAFAC class TrmE-Era-EngA-EngB-Septin-like GTPase superfamily. EngA (Der) GTPase family. In terms of assembly, associates with the 50S ribosomal subunit.

Functionally, GTPase that plays an essential role in the late steps of ribosome biogenesis. The sequence is that of GTPase Der from Rickettsia canadensis (strain McKiel).